A 167-amino-acid chain; its full sequence is MERFVVTAPPARNRSKTALYVTPLDRVTEFGGELHEDGGKLFCTSCNVVLNHVRKSAISDHLKSKTHTKRKAEFEEQNVRKKQRPLTASLQCNSPAQTEKASVIQDFVKMCLEANIPLEKADHPAVRAFLSRHVKNGGSIPKSDQLRRAYLPDGYENENQLLSSQDC.

Ser56 bears the Phosphoserine mark. The tract at residues 65 to 86 is disordered; the sequence is KTHTKRKAEFEEQNVRKKQRPL. Residues 80–84 carry the Nuclear localization signal motif; that stretch reads RKKQR. Ser164 bears the Phosphoserine mark.

The protein localises to the nucleus. Binds to nonmethylated 5'-d(CGG)(n)-3' trinucleotide repeats in the FMR1 promoter. May play a role in regulating FMR1 promoter. This chain is CGG triplet repeat-binding protein 1 (Cggbp1), found in Mus musculus (Mouse).